Here is a 724-residue protein sequence, read N- to C-terminus: Pesticidal crystal protein Cry11Ba (724 aa).

The protein belongs to the delta endotoxin family.

Promotes colloidosmotic lysis by binding to the midgut epithelial cells of mosquitos. Active on Aedes aegypti, Culex pipiens and Anopheles stephensi larvae. This is Pesticidal crystal protein Cry11Ba (cry11Ba) from Bacillus thuringiensis subsp. jegathesan.